Here is a 302-residue protein sequence, read N- to C-terminus: Oxygen-dependent coproporphyrinogen-III oxidase (302 aa).

S94 lines the substrate pocket. A divalent metal cation contacts are provided by H98 and H108. H108 functions as the Proton donor in the catalytic mechanism. Residue 110–112 (NVR) coordinates substrate. 2 residues coordinate a divalent metal cation: H147 and H177. The tract at residues 242–277 (YVEFNLVFDRGTLFGLQSGGRTESILMSMPPVANWR) is important for dimerization. 260 to 262 (GGR) contacts substrate.

The protein belongs to the aerobic coproporphyrinogen-III oxidase family. Homodimer. The cofactor is a divalent metal cation.

It is found in the cytoplasm. The enzyme catalyses coproporphyrinogen III + O2 + 2 H(+) = protoporphyrinogen IX + 2 CO2 + 2 H2O. Its pathway is porphyrin-containing compound metabolism; protoporphyrin-IX biosynthesis; protoporphyrinogen-IX from coproporphyrinogen-III (O2 route): step 1/1. Functionally, involved in the heme biosynthesis. Catalyzes the aerobic oxidative decarboxylation of propionate groups of rings A and B of coproporphyrinogen-III to yield the vinyl groups in protoporphyrinogen-IX. This chain is Oxygen-dependent coproporphyrinogen-III oxidase, found in Ralstonia nicotianae (strain ATCC BAA-1114 / GMI1000) (Ralstonia solanacearum).